The sequence spans 258 residues: Calcium release-activated calcium channel protein 1 (258 aa).

Residues 1–63 lie on the Cytoplasmic side of the membrane; it reads MYPECGVETK…SRAKLKASSR (63 aa). The helical transmembrane segment at 64 to 81 threads the bilayer; it reads TSALLSGFAMVAMVEVQL. Over 82–91 the chain is Extracellular; sequence EPNHAYPPGL. Residues 92 to 112 form a helical membrane-spanning segment; it reads LIAFSACTTVLVAVHLFALMV. The Cytoplasmic portion of the chain corresponds to 113–145; that stretch reads STCILPNIEAVSNVHNLNSVKESPHERMHHHIE. A helical transmembrane segment spans residues 146 to 166; it reads LAWAFSTVIGTLLFLAEVVLL. Topologically, residues 167–192 are extracellular; the sequence is CWVKFLPVNSPKISSNETSAVSSGQA. N182 is a glycosylation site (N-linked (GlcNAc...) asparagine). A helical membrane pass occupies residues 193-213; sequence AAITSTAIMVPFGLVFIVFAV. Topologically, residues 214–258 are cytoplasmic; the sequence is HFYRSLVSHKTDRQFQELNELAELAQLQDQLDHRGDPVQSPVHYA.

The protein belongs to the Orai family.

The protein resides in the cell membrane. Functionally, ca(2+) release-activated Ca(2+) (CRAC) channel subunit which mediates Ca(2+) influx following depletion of intracellular Ca(2+) stores. This chain is Calcium release-activated calcium channel protein 1 (orai1), found in Xenopus laevis (African clawed frog).